The primary structure comprises 1070 residues: DNA-directed RNA polymerase subunit beta (1070 aa).

This sequence belongs to the RNA polymerase beta chain family. In terms of assembly, in plastids the minimal PEP RNA polymerase catalytic core is composed of four subunits: alpha, beta, beta', and beta''. When a (nuclear-encoded) sigma factor is associated with the core the holoenzyme is formed, which can initiate transcription.

It localises to the plastid. The protein resides in the chloroplast. It carries out the reaction RNA(n) + a ribonucleoside 5'-triphosphate = RNA(n+1) + diphosphate. Its function is as follows. DNA-dependent RNA polymerase catalyzes the transcription of DNA into RNA using the four ribonucleoside triphosphates as substrates. The protein is DNA-directed RNA polymerase subunit beta of Nandina domestica (Heavenly bamboo).